A 360-amino-acid chain; its full sequence is Peptide chain release factor 1 (360 aa).

Glutamine 235 carries the post-translational modification N5-methylglutamine. Residues 285–313 form a disordered region; the sequence is KRQQAEASTRRNLLGSGDRSDRNRTYNFP.

It belongs to the prokaryotic/mitochondrial release factor family. In terms of processing, methylated by PrmC. Methylation increases the termination efficiency of RF1.

Its subcellular location is the cytoplasm. Peptide chain release factor 1 directs the termination of translation in response to the peptide chain termination codons UAG and UAA. In Salmonella paratyphi A (strain ATCC 9150 / SARB42), this protein is Peptide chain release factor 1.